Reading from the N-terminus, the 157-residue chain is Ribosome maturation factor RimP (157 aa).

The protein belongs to the RimP family.

The protein resides in the cytoplasm. Its function is as follows. Required for maturation of 30S ribosomal subunits. The sequence is that of Ribosome maturation factor RimP from Thermus thermophilus (strain ATCC BAA-163 / DSM 7039 / HB27).